Consider the following 396-residue polypeptide: Elongation factor Tu (396 aa).

In terms of domain architecture, tr-type G spans 10-206 (KPHVNIGTIG…AVDSYIPEPV (197 aa)). Residues 19 to 26 (GHVDHGKT) are G1. 19-26 (GHVDHGKT) lines the GTP pocket. A Mg(2+)-binding site is contributed by threonine 26. Residues 60–64 (GITIA) form a G2 region. The interval 81–84 (DCPG) is G3. GTP contacts are provided by residues 81–85 (DCPGH) and 136–139 (NKAD). The segment at 136–139 (NKAD) is G4. Residues 174 to 176 (SAL) form a G5 region.

It belongs to the TRAFAC class translation factor GTPase superfamily. Classic translation factor GTPase family. EF-Tu/EF-1A subfamily. Monomer.

It is found in the cytoplasm. It catalyses the reaction GTP + H2O = GDP + phosphate + H(+). Functionally, GTP hydrolase that promotes the GTP-dependent binding of aminoacyl-tRNA to the A-site of ribosomes during protein biosynthesis. The polypeptide is Elongation factor Tu (Geotalea uraniireducens (strain Rf4) (Geobacter uraniireducens)).